The primary structure comprises 236 residues: uncharacterized protein (236 aa).

Disordered regions lie at residues 1 to 48 (MHLR…RTFS), 67 to 122 (VHTP…HSPR), and 134 to 192 (KLHP…PNNT). Positions 85-99 (RAHRTAKHPARRQSC) are enriched in basic residues. Over residues 180–189 (PSPAIKPSPP) the composition is skewed to pro residues.

This is an uncharacterized protein from Encephalitozoon cuniculi (strain GB-M1) (Microsporidian parasite).